A 310-amino-acid chain; its full sequence is ADP-L-glycero-D-manno-heptose-6-epimerase (310 aa).

NADP(+) is bound by residues F10–I11, D31–N32, K38, K53, E75–S79, and N92. The active-site Proton acceptor is the Y140. K144 serves as a coordination point for NADP(+). N169 provides a ligand contact to substrate. Residues V170 and K178 each contribute to the NADP(+) site. Residue K178 is the Proton acceptor of the active site. Substrate is bound by residues S180, H187, F201–S204, R209, and Y272.

Belongs to the NAD(P)-dependent epimerase/dehydratase family. HldD subfamily. Homopentamer. Requires NADP(+) as cofactor.

It catalyses the reaction ADP-D-glycero-beta-D-manno-heptose = ADP-L-glycero-beta-D-manno-heptose. It functions in the pathway nucleotide-sugar biosynthesis; ADP-L-glycero-beta-D-manno-heptose biosynthesis; ADP-L-glycero-beta-D-manno-heptose from D-glycero-beta-D-manno-heptose 7-phosphate: step 4/4. Its function is as follows. Catalyzes the interconversion between ADP-D-glycero-beta-D-manno-heptose and ADP-L-glycero-beta-D-manno-heptose via an epimerization at carbon 6 of the heptose. This is ADP-L-glycero-D-manno-heptose-6-epimerase from Cronobacter sakazakii (strain ATCC BAA-894) (Enterobacter sakazakii).